Here is a 1345-residue protein sequence, read N- to C-terminus: DNA-directed RNA polymerase subunit beta (1345 aa).

This sequence belongs to the RNA polymerase beta chain family. The RNAP catalytic core consists of 2 alpha, 1 beta, 1 beta' and 1 omega subunit. When a sigma factor is associated with the core the holoenzyme is formed, which can initiate transcription.

It catalyses the reaction RNA(n) + a ribonucleoside 5'-triphosphate = RNA(n+1) + diphosphate. In terms of biological role, DNA-dependent RNA polymerase catalyzes the transcription of DNA into RNA using the four ribonucleoside triphosphates as substrates. The sequence is that of DNA-directed RNA polymerase subunit beta from Shewanella oneidensis (strain ATCC 700550 / JCM 31522 / CIP 106686 / LMG 19005 / NCIMB 14063 / MR-1).